Here is a 257-residue protein sequence, read N- to C-terminus: UPF0246 protein YaaA (257 aa).

It belongs to the UPF0246 family.

The chain is UPF0246 protein YaaA from Salmonella schwarzengrund (strain CVM19633).